We begin with the raw amino-acid sequence, 234 residues long: Glucosamine-6-phosphate deaminase (234 aa).

Residue D62 is the Proton acceptor; for enolization step of the active site. Catalysis depends on N128, which acts as the For ring-opening step. The active-site Proton acceptor; for ring-opening step is the H130. E135 serves as the catalytic For ring-opening step.

It belongs to the glucosamine/galactosamine-6-phosphate isomerase family. NagB subfamily.

It catalyses the reaction alpha-D-glucosamine 6-phosphate + H2O = beta-D-fructose 6-phosphate + NH4(+). It functions in the pathway amino-sugar metabolism; N-acetylneuraminate degradation; D-fructose 6-phosphate from N-acetylneuraminate: step 5/5. Functionally, catalyzes the reversible isomerization-deamination of glucosamine 6-phosphate (GlcN6P) to form fructose 6-phosphate (Fru6P) and ammonium ion. This is Glucosamine-6-phosphate deaminase from Streptococcus equi subsp. zooepidemicus (strain MGCS10565).